A 239-amino-acid polypeptide reads, in one-letter code: Transmembrane ascorbate ferrireductase 1 (239 aa).

The Cytoplasmic portion of the chain corresponds to 1-7 (MAVRINA). Residues 8–28 (MAVTFVAHALAVIAAIMVLVW) traverse the membrane as a helical segment. A Cytochrome b561 domain is found at 13-216 (VAHALAVIAA…FGAFVVLTAS (204 aa)). Residues 29–45 (SISYRGGLAWEATNKNL) are Lumenal-facing. The helical transmembrane segment at 46-66 (IFNLHPVLMLIGFIILGGEAI) threads the bilayer. Histidine 50 is a heme b binding site. The Cytoplasmic segment spans residues 67–81 (ISYKSLPLEKPVKKL). Residues 82 to 102 (IHLILHAIALALGIFGICAAF) form a helical membrane-spanning segment. Heme b contacts are provided by histidine 83 and histidine 117. Topologically, residues 103–119 (KNHNESHIPNLYSLHSW) are lumenal. The helical transmembrane segment at 120–140 (IGIGVISLYGFQWVYSFIVFF) threads the bilayer. Residues 141-155 (FPGGSTNLKSGLLPW) are Cytoplasmic-facing. Histidine 156 lines the heme b pocket. The helical transmembrane segment at 156 to 176 (HAMLGLFVYILAVGNAALGFL) threads the bilayer. Residues 177 to 193 (EKLTFLENGGLDKYGSE) are Lumenal-facing. Residues 194–214 (AFLINFTAIITILFGAFVVLT) form a helical membrane-spanning segment. Topologically, residues 215-239 (ASAESPSPSPSVSNDDSVDFSYSAI) are cytoplasmic. The tract at residues 217-239 (AESPSPSPSVSNDDSVDFSYSAI) is disordered. Positions 224-239 (PSVSNDDSVDFSYSAI) are enriched in low complexity.

In terms of assembly, homodimer. The cofactor is heme b. As to expression, expressed in roots, seedlings and leaves. Lower expression in flowers. Expressed in the L1 layer of the shoot apex, in the epidermis of leaf primordia and young leaves and in vascular bundles. In the differentiation zone of the root, detected in the pericycle and in the epidermis, but not in the cortex. Strongly expressed in the lateral part of the root cap and in the epidermis of the root tip, but not in the meristematic tissue. Not expressed in lateral roots. In mature embryos, expressed in the epidermis, cotyledon tips and root tips.

The protein resides in the vacuole membrane. The enzyme catalyses Fe(3+)(out) + L-ascorbate(in) = monodehydro-L-ascorbate radical(in) + Fe(2+)(out) + H(+). In terms of biological role, two-heme-containing cytochrome. Catalyzes ascorbate-dependent trans-membrane ferric-chelate reduction. Able to use dihydrolipoic acid (DHLA) as an alternative substrate to ascorbate. This Arabidopsis thaliana (Mouse-ear cress) protein is Transmembrane ascorbate ferrireductase 1 (CYB561A).